An 813-amino-acid polypeptide reads, in one-letter code: Protein translocase subunit SecA 2 (813 aa).

ATP contacts are provided by residues glutamine 105, 123-127, and aspartate 525; that span reads GEGKT.

It belongs to the SecA family. In terms of assembly, monomer and homodimer. Part of the essential Sec protein translocation apparatus which comprises SecA, SecYEG and auxiliary proteins SecDF-YajC and YidC.

The protein localises to the cell inner membrane. It localises to the cytoplasm. The catalysed reaction is ATP + H2O + cellular proteinSide 1 = ADP + phosphate + cellular proteinSide 2.. Part of the Sec protein translocase complex. Interacts with the SecYEG preprotein conducting channel. Has a central role in coupling the hydrolysis of ATP to the transfer of proteins into and across the cell membrane, serving both as a receptor for the preprotein-SecB complex and as an ATP-driven molecular motor driving the stepwise translocation of polypeptide chains across the membrane. The protein is Protein translocase subunit SecA 2 of Rhodopseudomonas palustris (strain BisA53).